Reading from the N-terminus, the 481-residue chain is RCARVCAVLFLFIQISYGQYQVPQVTVQALKPRGFKASIPDSPSVSLFVFQGNINRAISKSDIGTISGEILKAKDGRWTFEDPNVELKVGDVVNYYVVVVSNRGGYIKDNLSFTVSALEDPSSTGTGTDPVPTPTTCRPTATKLRSGVACAGQTIFEENFNTFREDVWQIEQYIPVYSTEFPFVSYQHLSQDPTVAVTGGNLRITPKLQQRMPGFTDSSIYSGSLNIFSGCTAPAEACMKDAWGASILPPVVSGRITSKAFAFTYGTVFVKAKLPQGDWIYPEILLEPFLKKYGSTHYSSGVIKIASARGNRELTSGYTDYSNKMLFGGPVMNLQCYDTLLESKASSNGRQWGDDFHEYVLRWAPERITLSVDGVEWARVEPTASGLSGRFPQTCSKLPRTFLAAGTKMAPFDDHFYLTLGVAAGSITEFPDGVQTSGSRPKPWTNTGSKAMLHFWEDMDSWFATWNQPQLLVDYVKVVAL.

Residues 1-18 form the signal peptide; it reads RCARVCAVLFLFIQISYG. The 101-residue stretch at 20–120 folds into the CBM39 domain; it reads YQVPQVTVQA…LSFTVSALED (101 aa). Asn-110 carries N-linked (GlcNAc...) asparagine glycosylation. In terms of domain architecture, GH16 spans 124-481; that stretch reads TGTGTDPVPT…LVDYVKVVAL (358 aa).

The protein belongs to the insect beta-1,3-glucan binding protein family.

It is found in the secreted. Involved in the recognition of invading microorganisms. Binds specifically to beta-1,3-glucan and activates the phenoloxidase cascade. This Hyphantria cunea (Fall webworm moth) protein is Beta-1,3-glucan-binding protein.